Here is a 134-residue protein sequence, read N- to C-terminus: Small ribosomal subunit protein uS11 (134 aa).

Belongs to the universal ribosomal protein uS11 family. Part of the 30S ribosomal subunit. Interacts with proteins S7 and S18. Binds to IF-3.

In terms of biological role, located on the platform of the 30S subunit, it bridges several disparate RNA helices of the 16S rRNA. Forms part of the Shine-Dalgarno cleft in the 70S ribosome. In Salinibacter ruber (strain DSM 13855 / M31), this protein is Small ribosomal subunit protein uS11.